Reading from the N-terminus, the 690-residue chain is Potassium-transporting ATPase ATP-binding subunit (690 aa).

The disordered stretch occupies residues 1–23 (MNSTSTVRQPGGPRQQRRHTPKA). 4 consecutive transmembrane segments (helical) span residues 44 to 64 (IMVK…TGML), 78 to 98 (AMFN…ANFA), 233 to 253 (IALT…VATL), and 268 to 288 (LLIA…LSAI). Aspartate 321 acts as the 4-aspartylphosphate intermediate in catalysis. Residues aspartate 358, glutamate 362, 389–396 (FSARTRMS), and lysine 408 contribute to the ATP site. Mg(2+)-binding residues include aspartate 531 and aspartate 535. The next 3 membrane-spanning stretches (helical) occupy residues 601 to 621 (FAII…IMDL), 627 to 647 (AVLS…PLAL), and 665 to 685 (ILVY…LIDL).

Belongs to the cation transport ATPase (P-type) (TC 3.A.3) family. Type IA subfamily. As to quaternary structure, the system is composed of three essential subunits: KdpA, KdpB and KdpC.

Its subcellular location is the cell inner membrane. The catalysed reaction is K(+)(out) + ATP + H2O = K(+)(in) + ADP + phosphate + H(+). Its function is as follows. Part of the high-affinity ATP-driven potassium transport (or Kdp) system, which catalyzes the hydrolysis of ATP coupled with the electrogenic transport of potassium into the cytoplasm. This subunit is responsible for energy coupling to the transport system and for the release of the potassium ions to the cytoplasm. In Synechocystis sp. (strain ATCC 27184 / PCC 6803 / Kazusa), this protein is Potassium-transporting ATPase ATP-binding subunit.